The chain runs to 413 residues: Tyrosine--tRNA ligase (413 aa).

Tyrosine 34 serves as a coordination point for L-tyrosine. A 'HIGH' region motif is present at residues 39 to 48; sequence CTAQSLHVGN. L-tyrosine is bound by residues tyrosine 171 and glutamine 175. Positions 231–235 match the 'KMSKS' region motif; it reads KMGKT. Lysine 234 is an ATP binding site. The 66-residue stretch at 346-411 folds into the S4 RNA-binding domain; it reads IPITELLVTI…GKKCHILVKI (66 aa).

The protein belongs to the class-I aminoacyl-tRNA synthetase family. TyrS type 1 subfamily. In terms of assembly, homodimer.

Its subcellular location is the cytoplasm. It carries out the reaction tRNA(Tyr) + L-tyrosine + ATP = L-tyrosyl-tRNA(Tyr) + AMP + diphosphate + H(+). Catalyzes the attachment of tyrosine to tRNA(Tyr) in a two-step reaction: tyrosine is first activated by ATP to form Tyr-AMP and then transferred to the acceptor end of tRNA(Tyr). The protein is Tyrosine--tRNA ligase of Orientia tsutsugamushi (strain Boryong) (Rickettsia tsutsugamushi).